The primary structure comprises 550 residues: Mitochondrial distribution and morphology protein 12 (550 aa).

The region spanning 1-550 (MSIDLNWETV…VYPSYWTFLV (550 aa)) is the SMP-LTD domain. Disordered regions lie at residues 76-97 (SDLA…DRRR), 196-386 (GHGH…KLRE), and 466-489 (ENEV…GGNG). Over residues 83–92 (GSEEDEEEIA) the composition is skewed to acidic residues. Positions 270–286 (PPFPPSSTGGPSPPPGL) are enriched in pro residues. The segment covering 288–305 (KPHHPHHPHHHHAHHAHP) has biased composition (basic residues). The span at 327–344 (PTRDKTTPSHHPDPEDVH) shows a compositional bias: basic and acidic residues. Residues 346–355 (PNTTTTNKQR) are compositionally biased toward polar residues. Low complexity predominate over residues 356 to 371 (STSPATSSPLATSAQE).

The protein belongs to the MDM12 family. In terms of assembly, component of the ER-mitochondria encounter structure (ERMES) or MDM complex, composed of MMM1, MDM10, MDM12 and MDM34. An MMM1 homodimer associates with one molecule of MDM12 on each side in a pairwise head-to-tail manner, and the SMP-LTD domains of MMM1 and MDM12 generate a continuous hydrophobic tunnel for phospholipid trafficking.

Its subcellular location is the mitochondrion outer membrane. It localises to the endoplasmic reticulum membrane. In terms of biological role, component of the ERMES/MDM complex, which serves as a molecular tether to connect the endoplasmic reticulum (ER) and mitochondria. Components of this complex are involved in the control of mitochondrial shape and protein biogenesis, and function in nonvesicular lipid trafficking between the ER and mitochondria. MDM12 is required for the interaction of the ER-resident membrane protein MMM1 and the outer mitochondrial membrane-resident beta-barrel protein MDM10. The MDM12-MMM1 subcomplex functions in the major beta-barrel assembly pathway that is responsible for biogenesis of all mitochondrial outer membrane beta-barrel proteins, and acts in a late step after the SAM complex. The MDM10-MDM12-MMM1 subcomplex further acts in the TOM40-specific pathway after the action of the MDM12-MMM1 complex. Essential for establishing and maintaining the structure of mitochondria and maintenance of mtDNA nucleoids. In Podospora anserina (strain S / ATCC MYA-4624 / DSM 980 / FGSC 10383) (Pleurage anserina), this protein is Mitochondrial distribution and morphology protein 12.